The sequence spans 367 residues: Inactive serine protease 39 (367 aa).

The N-terminal stretch at 1–31 is a signal peptide; sequence MWGSRAQQSGPDRGGACLLAAFLLCFSLLHA. One can recognise a Peptidase S1 domain in the interval 68 to 312; it reads IYGGQIAKAE…FSDWIKQKKA (245 aa). 4 disulfide bridges follow: Cys93-Cys109, Cys192-Cys269, Cys225-Cys248, and Cys259-Cys287.

It belongs to the peptidase S1 family. Expressed in testis. More specifically, abundantly expressed in the haploid round spermatid.

It is found in the cytoplasmic vesicle. Its subcellular location is the secretory vesicle. The protein localises to the acrosome. The protein resides in the secreted. May play an important role in the sperm/egg interaction; released during the acrosome reaction. The sequence is that of Inactive serine protease 39 (Prss39) from Mus musculus (Mouse).